The primary structure comprises 173 residues: MARQNEIEIQTRIGRQRITLDKIIHFPRGLAGFEGRHDFTLLQLREGAPFLVLQSLDDPGLGLLVADPYSFLTDYQIRVGDPEQRLLKLENIRQVAVLVTVSIPAGQPEKTALNLTGPILINHRARIGLQVPQTDASLPPQFYLHMDDANGSTTVRRKASPPAAGEDKGDVQE.

The tract at residues 152 to 173 (STTVRRKASPPAAGEDKGDVQE) is disordered.

Belongs to the FliW family. In terms of assembly, interacts with translational regulator CsrA and flagellin(s).

The protein resides in the cytoplasm. Acts as an anti-CsrA protein, binds CsrA and prevents it from repressing translation of its target genes, one of which is flagellin. Binds to flagellin and participates in the assembly of the flagellum. The chain is Flagellar assembly factor FliW from Nitratidesulfovibrio vulgaris (strain ATCC 29579 / DSM 644 / CCUG 34227 / NCIMB 8303 / VKM B-1760 / Hildenborough) (Desulfovibrio vulgaris).